The following is a 515-amino-acid chain: ATP synthase subunit alpha (515 aa).

171–178 is an ATP binding site; sequence GDRQTGKT.

The protein belongs to the ATPase alpha/beta chains family. F-type ATPases have 2 components, CF(1) - the catalytic core - and CF(0) - the membrane proton channel. CF(1) has five subunits: alpha(3), beta(3), gamma(1), delta(1), epsilon(1). CF(0) has three main subunits: a(1), b(2) and c(9-12). The alpha and beta chains form an alternating ring which encloses part of the gamma chain. CF(1) is attached to CF(0) by a central stalk formed by the gamma and epsilon chains, while a peripheral stalk is formed by the delta and b chains.

Its subcellular location is the cell inner membrane. The enzyme catalyses ATP + H2O + 4 H(+)(in) = ADP + phosphate + 5 H(+)(out). Functionally, produces ATP from ADP in the presence of a proton gradient across the membrane. The alpha chain is a regulatory subunit. In Stenotrophomonas maltophilia (strain R551-3), this protein is ATP synthase subunit alpha.